Here is a 689-residue protein sequence, read N- to C-terminus: Armadillo-like helical domain-containing protein 3 (689 aa).

Residues 520 to 538 traverse the membrane as a helical segment; that stretch reads IFTLTLMVVNLFNMFITYG.

This sequence belongs to the ARMH3 family.

Its subcellular location is the golgi apparatus membrane. It localises to the cytoplasm. Its function is as follows. May be involved in Golgi maintenance and protein secretion. The sequence is that of Armadillo-like helical domain-containing protein 3 from Xenopus laevis (African clawed frog).